Reading from the N-terminus, the 49-residue chain is Large ribosomal subunit protein bL33B (49 aa).

This sequence belongs to the bacterial ribosomal protein bL33 family.

This Shouchella clausii (strain KSM-K16) (Alkalihalobacillus clausii) protein is Large ribosomal subunit protein bL33B.